A 1553-amino-acid polypeptide reads, in one-letter code: Dual oxidase 1 (1553 aa).

The N-terminal stretch at 1–21 is a signal peptide; the sequence is MGFRLALAWTLLVGPWMPMGA. The Extracellular portion of the chain corresponds to 22-596; the sequence is RNSISWEVQR…YFKGSGFGFG (575 aa). The interval 26-593 is peroxidase-like; mediates peroxidase activity; sequence SWEVQRFDGW…MRDYFKGSGF (568 aa). N-linked (GlcNAc...) asparagine glycosylation is found at Asn-94, Asn-342, Asn-354, and Asn-534. A helical membrane pass occupies residues 597–617; it reads VTIGTLCCFPLVSLLSAWIVA. Over 618–1046 the chain is Cytoplasmic; it reads QLRRRNFKRL…KRFVENYRRH (429 aa). 3 EF-hand domains span residues 815 to 850, 851 to 886, and 895 to 930; these read PQDM…FMKG, SPEE…FIEI, and QLTE…HDSE. Asp-828, Asp-830, Asn-832, Tyr-834, Glu-839, Asp-864, Asp-866, Asn-868, and Glu-875 together coordinate Ca(2+). Residues 956 to 1250 are interaction with TXNDC11; the sequence is YISQEKLCPS…GSFALIQLPR (295 aa). Residues 1047-1067 traverse the membrane as a helical segment; sequence IGCLAVFYTIAGGLFLERAYY. Residues 1068–1082 lie on the Extracellular side of the membrane; that stretch reads YAFAAHHMGITDTTR. The chain crosses the membrane as a helical span at residues 1083–1103; the sequence is VGIILSRGTAASISFMFSYIL. The Ferric oxidoreductase domain occupies 1089 to 1271; it reads RGTAASISFM…YVGDKLVSLS (183 aa). Residues 1104 to 1138 lie on the Cytoplasmic side of the membrane; that stretch reads LTMCRNLITFLRETFLNRYVPFDAAVDFHRLIAST. The chain crosses the membrane as a helical span at residues 1139-1159; it reads AIILTVLHSAGHVVNVYLFSI. Topologically, residues 1160-1190 are extracellular; sequence SPLSVLSCLFPGLFHDNGSEFPQKYYWWFFQ. A helical transmembrane segment spans residues 1191–1211; sequence TVPGLTGVMLLLILAIMYVFA. Topologically, residues 1212-1228 are cytoplasmic; the sequence is SHHFRRCSFRGFWLTHH. A helical membrane pass occupies residues 1229–1249; it reads LYILLYMLLIIHGSFALIQLP. Position 1250 (Arg-1250) is a topological domain, extracellular. A helical transmembrane segment spans residues 1251–1271; that stretch reads FHIFFLVPALIYVGDKLVSLS. One can recognise an FAD-binding FR-type domain in the interval 1272 to 1378; the sequence is RKKVEISVVK…DGPFGEGHQE (107 aa). The Cytoplasmic portion of the chain corresponds to 1272–1553; sequence RKKVEISVVK…THFSHHYENF (282 aa).

The protein in the N-terminal section; belongs to the peroxidase family. As to quaternary structure, interacts with TXNDC11, TPO and CYBA. Post-translationally, N-glycosylated. As to expression, specifically expressed in thyroid.

The protein localises to the apical cell membrane. The catalysed reaction is NADH + O2 + H(+) = H2O2 + NAD(+). It catalyses the reaction NADPH + O2 + H(+) = H2O2 + NADP(+). It functions in the pathway hormone biosynthesis; thyroid hormone biosynthesis. The NADPH oxidase activity is calcium-dependent. Peroxidase activity is inhibited by aminobenzohydrazide. Functionally, generates hydrogen peroxide which is required for the activity of thyroid peroxidase/TPO and lactoperoxidase/LPO. Plays a role in thyroid hormones synthesis and lactoperoxidase-mediated antimicrobial defense at the surface of mucosa. May have its own peroxidase activity through its N-terminal peroxidase-like domain. This Sus scrofa (Pig) protein is Dual oxidase 1 (DUOX1).